Consider the following 945-residue polypeptide: MSELARFFIELGEKWQKRWAEARVYEPAPTLGVPKFFITAAYPYPNGAIHIGHGRTYLIADVLARFHRHLGRAVLFPMAFHYTGTPILTIAEAIAAGDETVVEEYMAIYGVPEEEMRKMGDPLYLARYFHEQSKRAMQKFGLSIDWTREFTTIDPEYQRFIQWQFEKLRKKGLIVRGRHPVGWCPRHSMPVGAHDTKDDKEPDIGEWTLIYFADRDGLIFPAATLRPETVLGVTNMWINPEGEYVVAEYDGRKMVLSRDAAYRLSFQGSVKVLREAKGREFVGREVQNPVTGEWVPIYGAKFVDPKVGTGVVMSVPAHAPYDYAALRDIGAIRLIPLIKVEGYGEYPAKDVVERMEIKSQTDPALEEATKEVYSAEYARGVMREDVVELVGRHLPEPARSMVMAVFKMYFAGRPVREAREFISKWLAEAGLGGVMYDIMNKPVYCRCGTEIVVKVLEDQWFINYGEPRWKELAKKLVEEMTIVPPEAKAQFFATIDWLDKRACARTRGLGTPLPWSHGWVIESLSDSTIYMAYYAVIKGIRRHNLRPEQLTEEFWDYVFLGVGTPEEVSAKTGIPAEALRAIREEFEFWYPLDSRNSGKDLIPNHLTFFIFNHVAIFPREKWPRQIVANGWVLREGEKMSKSKRNVLPLDKAVEMYGPDPLRATLAISAEVEQDLDFRHAEAVRNAQQLMSIYTLAQRLAQSAEDREPTWLDRWLLSEVALALERVRDAYEKVRVRQAAVELLYNIKNIFDSYMTAVERPSRLAVEVAKAWAVALEPIAPHLAEEVWSLLGGEGFVTSAKWPQLKPDPAALLARRYVDMVVEDVKKIPAYGEGVRRVVLYINPNFTWVKAALNNDVKSAIAAGTPPQLAKRLVELVRTLGDEVRSLIAAVENFDEREALLSYKNYVEKALGAPVEVYTAEDPAAPDLGGKKKAALPLKPGIFIER.

The 'HIGH' region signature appears at 43 to 53; sequence PYPNGAIHIGH. A 'KMSKS' region motif is present at residues 638–642; sequence KMSKS. ATP is bound at residue Lys641.

It belongs to the class-I aminoacyl-tRNA synthetase family.

It localises to the cytoplasm. It catalyses the reaction tRNA(Leu) + L-leucine + ATP = L-leucyl-tRNA(Leu) + AMP + diphosphate. This Pyrobaculum arsenaticum (strain DSM 13514 / JCM 11321 / PZ6) protein is Leucine--tRNA ligase.